The primary structure comprises 495 residues: Nuclear receptor subfamily 6 group A member 1 (495 aa).

The segment at 1-34 (MERDERPPSGGGGGGGSAGFLEPPAALPPPPRNG) is disordered. Gly residues predominate over residues 9–18 (SGGGGGGGSA). Residues 72–147 (QRTCLICGDR…MGMNRKAIRE (76 aa)) constitute a DNA-binding region (nuclear receptor). Residues cysteine 75, cysteine 78, cysteine 92, cysteine 95, cysteine 111, cysteine 117, cysteine 127, and cysteine 130 each contribute to the Zn(2+) site. NR C4-type zinc fingers lie at residues 75-95 (CLIC…CEGC) and 111-135 (CSRD…LLKC). 2 disordered regions span residues 145-165 (IRED…QISE) and 177-214 (FEEE…LSSS). The segment covering 180 to 192 (EANHWSNHGDSDH) has biased composition (basic and acidic residues). The sufficient for interaction with UIMC1 stretch occupies residues 187–268 (HGDSDHSSPG…RSLDPQSYSL (82 aa)). Residues 202–214 (SNQPSPGSTLSSS) show a composition bias toward low complexity. Residues 264–495 (QSYSLIHQLM…HSCKTSTVKE (232 aa)) enclose the NR LBD domain.

This sequence belongs to the nuclear hormone receptor family. NR6 subfamily. In terms of assembly, homodimer. Interacts with UIMC1. In terms of tissue distribution, expressed in the germ cells of both the adult testis and ovary, being most abundant in spermatids.

The protein localises to the nucleus. In terms of biological role, orphan nuclear receptor that binds to a response element containing the sequence 5'-TCAAGGTCA-3'. Acts as a regulator of embryonic stem cell pluripotency by mediating repression of POU5F1/OCT4: binds to the DR0 element within the POU5F1/OCT4 promoter and inhibits POU5F1/OCT4 expression during embryonic stem cell differentiation. Required to restrict POU5F1/OCT4 expression to the germ cell lineage. Involved in the regulation of gene expression in germ cell development during gametogenesis. This is Nuclear receptor subfamily 6 group A member 1 (Nr6a1) from Mus musculus (Mouse).